Consider the following 60-residue polypeptide: Large ribosomal subunit protein bL32 (60 aa).

Residues 1-23 (MAVPKRKKSKSRRNMHRSHHAIK) form a disordered region.

This sequence belongs to the bacterial ribosomal protein bL32 family.

This Wolbachia pipientis subsp. Culex pipiens (strain wPip) protein is Large ribosomal subunit protein bL32.